The sequence spans 336 residues: Biotin synthase (336 aa).

The Radical SAM core domain occupies 52 to 279 (KAIQLSTLMS…KSYVRLSAGR (228 aa)). [4Fe-4S] cluster-binding residues include cysteine 67, cysteine 71, and cysteine 74. Cysteine 111, cysteine 142, cysteine 202, and arginine 274 together coordinate [2Fe-2S] cluster.

Belongs to the radical SAM superfamily. Biotin synthase family. As to quaternary structure, homodimer. It depends on [4Fe-4S] cluster as a cofactor. The cofactor is [2Fe-2S] cluster.

It carries out the reaction (4R,5S)-dethiobiotin + (sulfur carrier)-SH + 2 reduced [2Fe-2S]-[ferredoxin] + 2 S-adenosyl-L-methionine = (sulfur carrier)-H + biotin + 2 5'-deoxyadenosine + 2 L-methionine + 2 oxidized [2Fe-2S]-[ferredoxin]. The protein operates within cofactor biosynthesis; biotin biosynthesis; biotin from 7,8-diaminononanoate: step 2/2. Its function is as follows. Catalyzes the conversion of dethiobiotin (DTB) to biotin by the insertion of a sulfur atom into dethiobiotin via a radical-based mechanism. The sequence is that of Biotin synthase from Pasteurella multocida (strain Pm70).